The following is a 314-amino-acid chain: 4-diphosphocytidyl-2-C-methyl-D-erythritol kinase (314 aa).

The active site involves Lys-11. 95 to 105 (PIGAGLAGGST) serves as a coordination point for ATP. Asp-137 is an active-site residue.

It belongs to the GHMP kinase family. IspE subfamily.

It catalyses the reaction 4-CDP-2-C-methyl-D-erythritol + ATP = 4-CDP-2-C-methyl-D-erythritol 2-phosphate + ADP + H(+). Its pathway is isoprenoid biosynthesis; isopentenyl diphosphate biosynthesis via DXP pathway; isopentenyl diphosphate from 1-deoxy-D-xylulose 5-phosphate: step 3/6. Its function is as follows. Catalyzes the phosphorylation of the position 2 hydroxy group of 4-diphosphocytidyl-2C-methyl-D-erythritol. This Synechococcus elongatus (strain ATCC 33912 / PCC 7942 / FACHB-805) (Anacystis nidulans R2) protein is 4-diphosphocytidyl-2-C-methyl-D-erythritol kinase.